Reading from the N-terminus, the 300-residue chain is Protease HtpX homolog (300 aa).

The next 2 membrane-spanning stretches (helical) occupy residues 7–24 (GILM…GALI) and 29–46 (GAII…FTFW). His130 contacts Zn(2+). The active site involves Glu131. His134 provides a ligand contact to Zn(2+). 2 helical membrane passes run 145–165 (VTAT…FFGG) and 174–194 (PMGL…AGLV). Residue Glu203 coordinates Zn(2+).

Belongs to the peptidase M48B family. Requires Zn(2+) as cofactor.

The protein localises to the cell inner membrane. The sequence is that of Protease HtpX homolog from Cereibacter sphaeroides (strain ATCC 17029 / ATH 2.4.9) (Rhodobacter sphaeroides).